The sequence spans 407 residues: Phospholipid-transporting ATPase accessory subunit CDC50 (407 aa).

The tract at residues 1 to 33 (MAPRRRRGAGQDGSDDGRSDSDAPKNRPPNTAF) is disordered. Residues 1–48 (MAPRRRRGAGQDGSDDGRSDSDAPKNRPPNTAFRQQRMRAWQCVLTPK) are Cytoplasmic-facing. The segment covering 15–25 (DDGRSDSDAPK) has biased composition (basic and acidic residues). The helical transmembrane segment at 49–69 (LIVTVFSILAAIYLGFGAWLT) threads the bilayer. The Extracellular segment spans residues 70–359 (YLAHTVRDLK…TMGSRNIWPG (290 aa)). A disulfide bridge links cysteine 85 with cysteine 139. N-linked (GlcNAc...) asparagine glycans are attached at residues asparagine 131 and asparagine 189. A disulfide bond links cysteine 193 and cysteine 210. 4 N-linked (GlcNAc...) asparagine glycosylation sites follow: asparagine 219, asparagine 232, asparagine 241, and asparagine 314. Residues 360–380 (IIFLIVGGICLVLDIYFILSF) traverse the membrane as a helical segment. The Cytoplasmic portion of the chain corresponds to 381 to 407 (FIWRPRKLGDPSYLSWNQPSAPGGHSS).

This sequence belongs to the CDC50/LEM3 family. As to quaternary structure, component of a flippase complex consisting of DNF1 and CDC50. Interacts with DNF1; the interaction is direct.

The protein resides in the cell membrane. Its function is as follows. Accessory component of a P4-ATPase flippase complex which catalyzes the hydrolysis of ATP coupled to the transport of phosphatidylcholine and phosphatidylserine from the lumen to the cytosolic leaflet of membranes and ensures the maintenance of asymmetric distribution of phospholipids. The sequence is that of Phospholipid-transporting ATPase accessory subunit CDC50 from Chaetomium thermophilum (strain DSM 1495 / CBS 144.50 / IMI 039719) (Thermochaetoides thermophila).